The following is a 295-amino-acid chain: Mycothiol acetyltransferase (295 aa).

2 consecutive N-acetyltransferase domains span residues 4–138 and 149–295; these read TEWR…RPLT and VRIA…YAAN. 1D-myo-inositol 2-(L-cysteinylamino)-2-deoxy-alpha-D-glucopyranoside is bound at residue Asp-36. Residues 77-79 and 85-90 each bind acetyl-CoA; these read LVV and RRGIGA. Residues Glu-176, Lys-217, and Glu-225 each coordinate 1D-myo-inositol 2-(L-cysteinylamino)-2-deoxy-alpha-D-glucopyranoside. Acetyl-CoA is bound by residues 229-231 and 236-242; these read VGV and QGRGLGY. Tyr-266 contacts 1D-myo-inositol 2-(L-cysteinylamino)-2-deoxy-alpha-D-glucopyranoside. Position 271-276 (271-276) interacts with acetyl-CoA; the sequence is NSAAVN.

The protein belongs to the acetyltransferase family. MshD subfamily. Monomer.

The enzyme catalyses 1D-myo-inositol 2-(L-cysteinylamino)-2-deoxy-alpha-D-glucopyranoside + acetyl-CoA = mycothiol + CoA + H(+). Its function is as follows. Catalyzes the transfer of acetyl from acetyl-CoA to desacetylmycothiol (Cys-GlcN-Ins) to form mycothiol. This Mycolicibacterium smegmatis (strain ATCC 700084 / mc(2)155) (Mycobacterium smegmatis) protein is Mycothiol acetyltransferase (mshD).